Here is a 142-residue protein sequence, read N- to C-terminus: Deoxyuridine 5'-triphosphate nucleotidohydrolase (142 aa).

The protein belongs to the dUTPase family. Requires Mg(2+) as cofactor.

It carries out the reaction dUTP + H2O = dUMP + diphosphate + H(+). In terms of biological role, this enzyme is involved in nucleotide metabolism: it produces dUMP, the immediate precursor of thymidine nucleotides and it decreases the intracellular concentration of dUTP so that uracil cannot be incorporated into DNA. The chain is Deoxyuridine 5'-triphosphate nucleotidohydrolase (DUT) from Swinepox virus (strain Kasza) (SWPV).